We begin with the raw amino-acid sequence, 254 residues long: Proteasome subunit alpha type-4 (254 aa).

Thr60 is modified (phosphothreonine). Positions 235–254 (QIEQEKQEQQEQDKKKKSNH) are disordered. Basic and acidic residues predominate over residues 237–248 (EQEKQEQQEQDK).

This sequence belongs to the peptidase T1A family. In terms of assembly, the 26S proteasome consists of a 20S proteasome core and two 19S regulatory subunits. The 20S proteasome core is composed of 28 subunits that are arranged in four stacked rings, resulting in a barrel-shaped structure. The two end rings are each formed by seven alpha subunits, and the two central rings are each formed by seven beta subunits. The catalytic chamber with the active sites is on the inside of the barrel. Interacts with CIC1.

It is found in the cytoplasm. The protein localises to the nucleus. Its function is as follows. The proteasome degrades poly-ubiquitinated proteins in the cytoplasm and in the nucleus. It is essential for the regulated turnover of proteins and for the removal of misfolded proteins. The proteasome is a multicatalytic proteinase complex that is characterized by its ability to cleave peptides with Arg, Phe, Tyr, Leu, and Glu adjacent to the leaving group at neutral or slightly basic pH. It has an ATP-dependent proteolytic activity. This is Proteasome subunit alpha type-4 (PRE6) from Saccharomyces cerevisiae (strain ATCC 204508 / S288c) (Baker's yeast).